The primary structure comprises 312 residues: Malate dehydrogenase (312 aa).

Residues 7–13 (GAAGGIG) and Asp-34 each bind NAD(+). Arg-81 and Arg-87 together coordinate substrate. Residues Asn-94 and 117-119 (ITN) each bind NAD(+). Substrate-binding residues include Asn-119 and Arg-153. The Proton acceptor role is filled by His-177. Position 227 (Met-227) interacts with NAD(+).

This sequence belongs to the LDH/MDH superfamily. MDH type 1 family. As to quaternary structure, homodimer.

It catalyses the reaction (S)-malate + NAD(+) = oxaloacetate + NADH + H(+). Functionally, catalyzes the reversible oxidation of malate to oxaloacetate. This chain is Malate dehydrogenase, found in Edwardsiella ictaluri (strain 93-146).